The sequence spans 191 residues: Thymidylate kinase (191 aa).

Residue 7 to 14 (GIDGVGKS) participates in ATP binding.

This sequence belongs to the thymidylate kinase family.

It catalyses the reaction dTMP + ATP = dTDP + ADP. In terms of biological role, phosphorylation of dTMP to form dTDP in both de novo and salvage pathways of dTTP synthesis. The chain is Thymidylate kinase from Helicobacter acinonychis (strain Sheeba).